We begin with the raw amino-acid sequence, 182 residues long: MATPETRRRPNILVTGSPGTGKSTLGQQVAEKLGFVFIEVSKEVRENNLQGDFDEQYNCHVLDEDKLLDHISDRLDSDEGGIVVDYHGCDLFPERWFDVVVVLRCPTEKLYDRLQSRGYSEFKIKENVECEIFGTLLEEARESYSEDIVHELQSETTEQMEENLERICELAGEFKNEHTMEQ.

The interval 1-20 (MATPETRRRPNILVTGSPGT) is disordered. Glycine 19, glycine 21, lysine 22, serine 23, and threonine 24 together coordinate ATP. Positions 39-62 (EVSKEVRENNLQGDFDEQYNCHVL) are NMPbind. The tract at residues 116 to 126 (SRGYSEFKIKE) is LID. ATP is bound at residue arginine 117.

Belongs to the adenylate kinase family. AK6 subfamily. As to quaternary structure, monomer and homodimer. Interacts with small ribosomal subunit protein uS11. Not a structural component of 43S pre-ribosomes, but transiently interacts with them by binding to uS11.

Its subcellular location is the cytoplasm. The protein resides in the nucleus. The catalysed reaction is AMP + ATP = 2 ADP. The enzyme catalyses ATP + H2O = ADP + phosphate + H(+). In terms of biological role, broad-specificity nucleoside monophosphate (NMP) kinase that catalyzes the reversible transfer of the terminal phosphate group between nucleoside triphosphates and monophosphates. Also has ATPase activity. Involved in the late cytoplasmic maturation steps of the 40S ribosomal particles, specifically 18S rRNA maturation. While NMP activity is not required for ribosome maturation, ATPase activity is. Associates transiently with small ribosomal subunit protein uS11. ATP hydrolysis breaks the interaction with uS11. May temporarily remove uS11 from the ribosome to enable a conformational change of the ribosomal RNA that is needed for the final maturation step of the small ribosomal subunit. Its NMP activity may have a role in nuclear energy homeostasis. AMP and dAMP are the preferred substrates, but CMP and TMP are also good substrates. ATP and dATP are the best phosphate donors. The sequence is that of Adenylate kinase isoenzyme 6 homolog from Caenorhabditis elegans.